Reading from the N-terminus, the 524-residue chain is Peptide chain release factor 3 (524 aa).

Residues 11 to 278 (AKRRTFAIIS…SFVQYAPEPG (268 aa)) form the tr-type G domain. Residues 20–27 (SHPDAGKT), 88–92 (DTPGH), and 142–145 (NKLD) contribute to the GTP site.

Belongs to the TRAFAC class translation factor GTPase superfamily. Classic translation factor GTPase family. PrfC subfamily.

Its subcellular location is the cytoplasm. Increases the formation of ribosomal termination complexes and stimulates activities of RF-1 and RF-2. It binds guanine nucleotides and has strong preference for UGA stop codons. It may interact directly with the ribosome. The stimulation of RF-1 and RF-2 is significantly reduced by GTP and GDP, but not by GMP. The protein is Peptide chain release factor 3 of Lacticaseibacillus paracasei (strain ATCC 334 / BCRC 17002 / CCUG 31169 / CIP 107868 / KCTC 3260 / NRRL B-441) (Lactobacillus paracasei).